The primary structure comprises 182 residues: ATP synthase subunit delta, organellar chromatophore (182 aa).

It belongs to the ATPase delta chain family. F-type ATPases have 2 components, F(1) - the catalytic core - and F(0) - the membrane proton channel. F(1) has five subunits: alpha(3), beta(3), gamma(1), delta(1), epsilon(1). CF(0) has four main subunits: a(1), b(1), b'(1) and c(10-14). The alpha and beta chains form an alternating ring which encloses part of the gamma chain. F(1) is attached to F(0) by a central stalk formed by the gamma and epsilon chains, while a peripheral stalk is formed by the delta, b and b' chains.

The protein resides in the plastid. It is found in the organellar chromatophore thylakoid membrane. In terms of biological role, f(1)F(0) ATP synthase produces ATP from ADP in the presence of a proton or sodium gradient. F-type ATPases consist of two structural domains, F(1) containing the extramembraneous catalytic core and F(0) containing the membrane proton channel, linked together by a central stalk and a peripheral stalk. During catalysis, ATP synthesis in the catalytic domain of F(1) is coupled via a rotary mechanism of the central stalk subunits to proton translocation. Its function is as follows. This protein is part of the stalk that links CF(0) to CF(1). It either transmits conformational changes from CF(0) to CF(1) or is implicated in proton conduction. In Paulinella chromatophora, this protein is ATP synthase subunit delta, organellar chromatophore.